The sequence spans 63 residues: Sperm protamine P1 (63 aa).

Positions 1–47 (MARCRRHIRSRSRSRNQCQRRRRRSHYNRRRTYRRSRRHSRRRRVRR) are disordered.

This sequence belongs to the protamine P1 family. As to expression, testis.

Its subcellular location is the nucleus. It localises to the chromosome. Protamines substitute for histones in the chromatin of sperm during the haploid phase of spermatogenesis. They compact sperm DNA into a highly condensed, stable and inactive complex. The protein is Sperm protamine P1 (PRM1) of Planigale tenuirostris (Narrow-nosed planigale).